The chain runs to 241 residues: F-box protein At3g22350 (241 aa).

The F-box domain occupies Met1–His44.

This Arabidopsis thaliana (Mouse-ear cress) protein is F-box protein At3g22350.